We begin with the raw amino-acid sequence, 270 residues long: Insulin-like growth factor-binding protein-like 1 (270 aa).

Positions 1 to 17 (MPRLPLLLLLLPSLARG) are cleaved as a signal peptide. The IGFBP N-terminal domain maps to 26–101 (RHPECSPCQQ…PEGTGLCVCA (76 aa)). Cystine bridges form between Cys-30/Cys-55, Cys-33/Cys-57, Cys-38/Cys-58, Cys-44/Cys-61, Cys-69/Cys-83, Cys-77/Cys-98, and Cys-107/Cys-143. The 59-residue stretch at 87–145 (ASGTAPEGTGLCVCAQRGAVCGSDGRSYSSICALRLRARHAPRAHHGHLHKARDGPCEF) folds into the Kazal-like domain. An Ig-like C2-type domain is found at 147 to 251 (PVVLMPPRDI…GEAQSHGTVT (105 aa)). N-linked (GlcNAc...) asparagine glycosylation occurs at Asn-158. A disulfide bridge links Cys-168 with Cys-235.

Its subcellular location is the secreted. IGF-binding proteins prolong the half-life of IGFs and have been shown to either inhibit or stimulate the growth promoting effects of the IGFs in cell culture. They alter the interaction of IGFs with their cell surface receptors. The protein is Insulin-like growth factor-binding protein-like 1 (Igfbpl1) of Mus musculus (Mouse).